An 861-amino-acid chain; its full sequence is Probable beta-glucosidase A (861 aa).

An N-terminal signal peptide occupies residues 1–19; the sequence is MKLSILEAAALTAASVASA. N-linked (GlcNAc...) asparagine glycosylation is found at Asn-62, Asn-212, and Asn-253. Residue Asp-281 is part of the active site. 8 N-linked (GlcNAc...) asparagine glycosylation sites follow: Asn-316, Asn-323, Asn-355, Asn-524, Asn-543, Asn-565, Asn-669, and Asn-713. Positions 735–754 are disordered; sequence PEGATDGSPQPRLPASGGPG.

This sequence belongs to the glycosyl hydrolase 3 family.

The protein resides in the secreted. It carries out the reaction Hydrolysis of terminal, non-reducing beta-D-glucosyl residues with release of beta-D-glucose.. Its pathway is glycan metabolism; cellulose degradation. Functionally, beta-glucosidases are one of a number of cellulolytic enzymes involved in the degradation of cellulosic biomass. Catalyzes the last step releasing glucose from the inhibitory cellobiose. The protein is Probable beta-glucosidase A (bglA) of Aspergillus terreus.